Consider the following 320-residue polypeptide: MAPPAAVSPPSRSAELATSTKLPVMSKNINTKTVEEMLGQWDDFKFAPIRESQVSRAMTRRYFQDLDNYAESDIVIIGAGSCGLSAAYILGKKRPDLKIAIIEASVSPGGGAWLGGQLFSAMIMRKPADAFLREVGVPYEDEGNYVVVKHAALFTSTIMSKVLQMPNIKLFNATCVEDLITRPSEEGVRIAGVVTNWTLVSMHHDDQSCMDPNTINAPLIISTTGHDGPMGAFCVKRLVSMQRIEKLGGMRGLDMNLAEDAIVKGTREIVPGLIVGGMELSEVDGANRMGPTFGAMALSGLKAAEEALKIFDTRKKQNDL.

Substrate-binding positions include C82, 103–104 (EA), G111, and V176. Position 209 is a 2,3-didehydroalanine (Cys) (C209). Substrate contacts are provided by residues D211, H226, M278, and 288 to 290 (RMG).

The protein belongs to the THI4 family. In terms of assembly, homooctamer. Fe cation is required as a cofactor. Post-translationally, during the catalytic reaction, a sulfide is transferred from Cys-209 to a reaction intermediate, generating a dehydroalanine residue.

It is found in the cytoplasm. Its subcellular location is the nucleus. It catalyses the reaction [ADP-thiazole synthase]-L-cysteine + glycine + NAD(+) = [ADP-thiazole synthase]-dehydroalanine + ADP-5-ethyl-4-methylthiazole-2-carboxylate + nicotinamide + 3 H2O + 2 H(+). Functionally, involved in biosynthesis of the thiamine precursor thiazole. Catalyzes the conversion of NAD and glycine to adenosine diphosphate 5-(2-hydroxyethyl)-4-methylthiazole-2-carboxylic acid (ADT), an adenylated thiazole intermediate. The reaction includes an iron-dependent sulfide transfer from a conserved cysteine residue of the protein to a thiazole intermediate. The enzyme can only undergo a single turnover, which suggests it is a suicide enzyme. May have additional roles in adaptation to various stress conditions and in DNA damage tolerance. This chain is Thiamine thiazole synthase (sti35), found in Fusarium oxysporum f. sp. lycopersici (strain 4287 / CBS 123668 / FGSC 9935 / NRRL 34936) (Fusarium vascular wilt of tomato).